The sequence spans 880 residues: MKQLTGAQIRQMFLDFFQEKGHAVEPSASLVPHEDPSLLWINSGVATLKKYFDGRVIPQNPRITNAQKSIRTNDIENVGKTARHHTFFEMLGNFSIGDYFKEEAITWAWEFLTSDKWIGFDKELLSVTIHPEDEEAFTIWNEKMGVPKERIIRLEENFWDIGEGPSGPNTEIFYDRGEAYGNDFSDPELYPGGENERYLEVWNLVFSQFNHNPDGSYTPLPKKNIDTGMGLERMTSIVQDVPTNFDTDLFMPMIGATETISGEKYRNGDLEKDMAFKVIADHIRTVTFAVGDGALPSNEGRGYVLRRLLRRAVRYSKKLNINRPFMFELVPVVGEVMKDFYPEVLEKKDFIAKVVKNEEERFHETLHDGEAILAEVIAKAKEEKTTVISGVDAFRLYDTYGFPIELTEEYAEEAGMTVDHEGFENEMEKQRERARAARQDVDSMQVQGGVLGEIKVASEFVGYGTVATESNVVALVKNGEYTDSLQAGEEGQLILDVTPFYAESGGQIADRGYLLADGVKVLVKDVQKAPNGQNLHKVVVEEGTLTKDAAVKAIIDTKNRSSVVKNHTATHLLHQALKDVLGTHVNQAGSLVTSERLRFDFSHFGQVQADELEKIERMVNEKIWESIDVEISQKAIEEAKEMGAMALFGEKYGDVVRVVQVGDYSLELCGGCHVDNTASIGIFKIVAESGIGAGTRRIEAVTGKSAYELMNDQVGLLKEAAGKMKTNPKDILTRVDGLFAEVKQLQKENESLAAKLSNIEAGNLTDSVMTVDGVNVLAAKVNVADMNNLRTMMDDLKNKLESAVVVLASVNDDKVNILAGVTKDLISQGYHAGKLVKEVASRCGGGGGGRPDMAQAGGKNPAQVEEALAFVQEYVKSVSK.

Zn(2+) is bound by residues His567, His571, Cys669, and His673.

The protein belongs to the class-II aminoacyl-tRNA synthetase family. It depends on Zn(2+) as a cofactor.

It localises to the cytoplasm. The enzyme catalyses tRNA(Ala) + L-alanine + ATP = L-alanyl-tRNA(Ala) + AMP + diphosphate. Functionally, catalyzes the attachment of alanine to tRNA(Ala) in a two-step reaction: alanine is first activated by ATP to form Ala-AMP and then transferred to the acceptor end of tRNA(Ala). Also edits incorrectly charged Ser-tRNA(Ala) and Gly-tRNA(Ala) via its editing domain. This Bacillus cereus (strain ATCC 14579 / DSM 31 / CCUG 7414 / JCM 2152 / NBRC 15305 / NCIMB 9373 / NCTC 2599 / NRRL B-3711) protein is Alanine--tRNA ligase.